A 318-amino-acid chain; its full sequence is Basic leucine zipper (bZIP) transcription factor atfB (318 aa).

Residues 114-157 (FNSSPPEYAPPKHRSSLSEQSQTDGYGVSTRRRKASAIDQCEQQ) form a disordered region. The tract at residues 160–199 (REKREKFLERNRLAASKCRQKKKEHTKLLETRFREVSNKK) is basic motif. Residues 160–223 (REKREKFLER…LNLKNEMLRH (64 aa)) enclose the bZIP domain. The leucine-zipper stretch occupies residues 202-216 (LESEIEHLRSEVLNL). Residues 275–301 (DGPMQLPSEMGSPLDQRRDSEQSIMTE) are disordered.

It belongs to the bZIP family. ATF subfamily.

The protein resides in the nucleus. In terms of biological role, transcription factor that acts as a key player in the regulatory circuit that integrates secondary metabolism and cellular response to oxidative stress. Regulates the genes involved in development and stress response through direct binding to their promoters. Particularly involved in the resistance to oxidative stress in asexual conidiospores. The chain is Basic leucine zipper (bZIP) transcription factor atfB from Aspergillus oryzae (strain ATCC 42149 / RIB 40) (Yellow koji mold).